The primary structure comprises 36 residues: Hemoglobin subunit beta (36 aa).

A Globin domain is found at 1–36 (VCVLAHHFGKEFTPQVQAAYQKVVAGVANALAHKYH). Position 34 is an N6-acetyllysine (Lys34).

It belongs to the globin family. Heterotetramer of two alpha chains and two beta chains. In terms of tissue distribution, red blood cells.

Functionally, involved in oxygen transport from the lung to the various peripheral tissues. This Pongo pygmaeus (Bornean orangutan) protein is Hemoglobin subunit beta (HBB).